Consider the following 489-residue polypeptide: WPP domain-interacting protein 1 (489 aa).

The tract at residues 49–73 (SNSVELGKPMSFDSPGDGGGAYSPV) is disordered. 3 consecutive short sequence motifs (nuclear localization signal) follow at residues 80–81 (RK), 83–84 (RR), and 104–105 (KR). The interval 195–264 (PMISSGQGGN…DDAGGEGGES (70 aa)) is disordered. Over residues 215 to 224 (GESVDFEKEN) the composition is skewed to basic and acidic residues. The stretch at 323–446 (EIVTLVNNVE…QDLQNDCIEI (124 aa)) forms a coiled coil. The 31-residue stretch at 459 to 489 (SYVLIQLVLLSTVVLLLLSQLLPEPDTVVPT) folds into the KASH domain. The helical transmembrane segment at 460–480 (YVLIQLVLLSTVVLLLLSQLL) threads the bilayer.

As to quaternary structure, homodimer and heterodimer with WIP2. Component of Ran complexes at least composed of WIT1 or WIT2, RANGAP1 or RANGAP2, and WIP1 or WIP2 or WIP3. Interacts with RANGAP1, RANGAP2, WPP1/MAF1, and WPP2/MAF2. Interacts with SUN1 and SUN2. Interacts with KIN1. Core component of the LINC complex which is composed of inner nuclear membrane SUN domain-containing proteins coupled to outer nuclear membrane WIP and WIT proteins. The LINC complex also involves nucleoskeletal proteins CRWN/LINC and possibly KAKU4 and the cytoskeletal myosin KAKU1. Interacts with WIT1 and SUN2. Interacts with WIT2. Interacts with SUN3. In terms of tissue distribution, expressed in seedlings, roots, stems, leaves, and flowers.

The protein localises to the nucleus envelope. Its subcellular location is the nucleus membrane. Its function is as follows. Mediates and enhances the nuclear envelope docking of RANGAP proteins mediated by WIT1 and WIT2 in the undifferentiated cells of root tips. As component of the SUN-WIP-WIT2-KAKU1 complex, mediates the transfer of cytoplasmic forces to the nuclear envelope (NE), leading to nuclear shape changes. The polypeptide is WPP domain-interacting protein 1 (WIP1) (Arabidopsis thaliana (Mouse-ear cress)).